We begin with the raw amino-acid sequence, 76 residues long: FMRFamide-related neuropeptides (76 aa).

Positions 1–27 (MCVQTRMLVAVAVVLVVLAVLSDPVSA) are cleaved as a signal peptide. F39 carries the post-translational modification Phenylalanine amide.

Belongs to the FARP (FMRFamide related peptide) family. In terms of tissue distribution, olfactory lobe and accessory lobe, olfactory globular tract, olfactory lobe cells (at protein level). Widely distributed throughout nervous system.

The protein localises to the secreted. GYRKPPFNGSIF-amide may be involved in olfaction and contraction of hindgut. This chain is FMRFamide-related neuropeptides, found in Procambarus clarkii (Red swamp crayfish).